A 146-amino-acid chain; its full sequence is VKWTDKERAVILGIFSGLDYEDIGPKALVRCLIVYPWTQRYFGTFGNLSTPAAISGNPKIAAHGVKVLHGLDMALQHMDNIMETYADLSILHSETLHVDPDNFKLLADCLTITIAAKMGHCFTPDTQIAFHKFLAVVVSALGKQYC.

The Globin domain occupies 2 to 146; that stretch reads KWTDKERAVI…VVSALGKQYC (145 aa). Heme b-binding residues include His-63 and His-92.

The protein belongs to the globin family. As to quaternary structure, heterotetramer of two alpha chains and two beta chains. As to expression, red blood cells.

Involved in oxygen transport from gills to the various peripheral tissues. This is Hemoglobin subunit beta-1 from Lycodes reticulatus (Arctic eelpout).